The chain runs to 498 residues: ATP synthase subunit beta, chloroplastic (498 aa).

Residue 172 to 179 (GGAGVGKT) coordinates ATP.

The protein belongs to the ATPase alpha/beta chains family. In terms of assembly, F-type ATPases have 2 components, CF(1) - the catalytic core - and CF(0) - the membrane proton channel. CF(1) has five subunits: alpha(3), beta(3), gamma(1), delta(1), epsilon(1). CF(0) has four main subunits: a(1), b(1), b'(1) and c(9-12).

The protein resides in the plastid. It is found in the chloroplast thylakoid membrane. The catalysed reaction is ATP + H2O + 4 H(+)(in) = ADP + phosphate + 5 H(+)(out). Functionally, produces ATP from ADP in the presence of a proton gradient across the membrane. The catalytic sites are hosted primarily by the beta subunits. This chain is ATP synthase subunit beta, chloroplastic, found in Galbulimima belgraveana (Northern pigeonberry ash).